A 186-amino-acid polypeptide reads, in one-letter code: TATA-box-binding protein E (186 aa).

A run of 2 repeats spans residues 10-86 (IENV…FDKL) and 101-179 (VQNI…TSRL).

It belongs to the TBP family.

General factor that plays a role in the activation of archaeal genes transcribed by RNA polymerase. Binds specifically to the TATA box promoter element which lies close to the position of transcription initiation. The sequence is that of TATA-box-binding protein E (tbpE) from Halobacterium salinarum (strain ATCC 700922 / JCM 11081 / NRC-1) (Halobacterium halobium).